Here is a 293-residue protein sequence, read N- to C-terminus: Protease HtpX (293 aa).

Helical transmembrane passes span 4–24 (IALF…VLSL) and 34–54 (GLMI…LLMS). His139 serves as a coordination point for Zn(2+). Glu140 is an active-site residue. His143 is a binding site for Zn(2+). Transmembrane regions (helical) follow at residues 158–178 (VVNT…AGFM) and 193–213 (LIYF…ASII). Glu222 contacts Zn(2+).

It belongs to the peptidase M48B family. Zn(2+) is required as a cofactor.

It is found in the cell inner membrane. This chain is Protease HtpX, found in Escherichia coli (strain ATCC 8739 / DSM 1576 / NBRC 3972 / NCIMB 8545 / WDCM 00012 / Crooks).